A 152-amino-acid chain; its full sequence is 2-C-methyl-D-erythritol 2,4-cyclodiphosphate synthase (152 aa).

Residues Asp-8 and His-10 each contribute to the a divalent metal cation site. Residues 8–10 (DSH) and 34–35 (HS) each bind 4-CDP-2-C-methyl-D-erythritol 2-phosphate. His-42 is a binding site for a divalent metal cation. Residues 56–58 (DIG) and 61–65 (FPDTD) each bind 4-CDP-2-C-methyl-D-erythritol 2-phosphate.

Belongs to the IspF family. Homotrimer. Requires a divalent metal cation as cofactor.

It carries out the reaction 4-CDP-2-C-methyl-D-erythritol 2-phosphate = 2-C-methyl-D-erythritol 2,4-cyclic diphosphate + CMP. It participates in isoprenoid biosynthesis; isopentenyl diphosphate biosynthesis via DXP pathway; isopentenyl diphosphate from 1-deoxy-D-xylulose 5-phosphate: step 4/6. Involved in the biosynthesis of isopentenyl diphosphate (IPP) and dimethylallyl diphosphate (DMAPP), two major building blocks of isoprenoid compounds. Catalyzes the conversion of 4-diphosphocytidyl-2-C-methyl-D-erythritol 2-phosphate (CDP-ME2P) to 2-C-methyl-D-erythritol 2,4-cyclodiphosphate (ME-CPP) with a corresponding release of cytidine 5-monophosphate (CMP). This Thermus thermophilus (strain ATCC BAA-163 / DSM 7039 / HB27) protein is 2-C-methyl-D-erythritol 2,4-cyclodiphosphate synthase.